A 744-amino-acid polypeptide reads, in one-letter code: Collagen alpha-1(VIII) chain (744 aa).

An N-terminal signal peptide occupies residues 1–24; that stretch reads MAVPPRPLQLLGILFIISLNSVRL. Residues 29–118 are nonhelical region (NC2); the sequence is AYYGIKPLPP…KGEVPLASLR (90 aa). Positions 101–110 are enriched in basic and acidic residues; sequence KEVVPKKGKG. Disordered stretches follow at residues 101-395, 412-439, and 457-590; these read KEVV…EPGL, GPKG…GFPG, and GPIG…DMGL. The interval 119–572 is triple-helical region (COL1); the sequence is GEQGPRGEPG…PGPPGPPGPP (454 aa). The span at 129-138 shows a compositional bias: pro residues; the sequence is PRGPPGPPGL. A compositionally biased stretch (low complexity) spans 169–191; sequence KPGAMGMPGAKGEIGPKGEIGPM. Residues 204-218 are compositionally biased toward gly residues; sequence GLPGIGKPGGPGLPG. Positions 298–307 are enriched in low complexity; that stretch reads PQGLIGVPGV. Gly residues-rich tracts occupy residues 329 to 338 and 412 to 421; these read GFPGGKGEQG and GPKGEGGVVG. Low complexity-rich tracts occupy residues 470-507 and 548-557; these read LPGL…VGPS and PGALGPQGQP. Residues 559 to 579 show a composition bias toward pro residues; it reads LPGPPGPPGPPGPPAVMPTPS. The interval 573 to 744 is nonhelical region (NC1); that stretch reads AVMPTPSPQG…SFSGYLLYPM (172 aa). The C1q domain maps to 611-744; that stretch reads PAYEMPAFTA…SFSGYLLYPM (134 aa).

In terms of assembly, homotrimers, or heterotrimers in association with alpha 2(VIII) type collagens. Four homotrimers can form a tetrahedron stabilized by central interacting C-terminal NC1 trimers. Prolines at the third position of the tripeptide repeating unit (G-X-Y) are hydroxylated in some or all of the chains. In terms of processing, proteolytically cleaved by neutrophil elastase, in vitro. Proteolytic processing produces the C-terminal NC1 domain fragment, vastatin. High levels in calvarium, eye and skin of newborn mice; also in various epithelial, endothelial and mesenchymal cells.

It localises to the secreted. The protein localises to the extracellular space. The protein resides in the extracellular matrix. Its subcellular location is the basement membrane. In terms of biological role, macromolecular component of the subendothelium. Major component of the Descemet's membrane (basement membrane) of corneal endothelial cells. Also a component of the endothelia of blood vessels. Necessary for migration and proliferation of vascular smooth muscle cells and thus, has a potential role in the maintenance of vessel wall integrity and structure, in particular in atherogenesis. Its function is as follows. Vastatin, the C-terminal fragment comprising the NC1 domain, inhibits aortic endothelial cell proliferation and causes cell apoptosis. This Mus musculus (Mouse) protein is Collagen alpha-1(VIII) chain (Col8a1).